The sequence spans 812 residues: Probable inorganic carbon transporter subunit DabA (812 aa).

Zn(2+)-binding residues include Cys337, Asp339, His499, and Cys514.

This sequence belongs to the inorganic carbon transporter (TC 9.A.2) DabA family. As to quaternary structure, forms a complex with DabB. Requires Zn(2+) as cofactor.

It localises to the cell inner membrane. Functionally, part of an energy-coupled inorganic carbon pump. In Xanthomonas euvesicatoria pv. vesicatoria (strain 85-10) (Xanthomonas campestris pv. vesicatoria), this protein is Probable inorganic carbon transporter subunit DabA.